Here is a 343-residue protein sequence, read N- to C-terminus: Tetraacyldisaccharide 4'-kinase (343 aa).

Residue 51-58 participates in ATP binding; it reads TVGGAGKT.

Belongs to the LpxK family.

The catalysed reaction is a lipid A disaccharide + ATP = a lipid IVA + ADP + H(+). The protein operates within glycolipid biosynthesis; lipid IV(A) biosynthesis; lipid IV(A) from (3R)-3-hydroxytetradecanoyl-[acyl-carrier-protein] and UDP-N-acetyl-alpha-D-glucosamine: step 6/6. In terms of biological role, transfers the gamma-phosphate of ATP to the 4'-position of a tetraacyldisaccharide 1-phosphate intermediate (termed DS-1-P) to form tetraacyldisaccharide 1,4'-bis-phosphate (lipid IVA). This chain is Tetraacyldisaccharide 4'-kinase, found in Xanthobacter autotrophicus (strain ATCC BAA-1158 / Py2).